Consider the following 492-residue polypeptide: Ketol-acid reductoisomerase (NADP(+)) (492 aa).

The 194-residue stretch at 15–208 (AQLGKCRFMA…GGHRAGVLEF (194 aa)) folds into the KARI N-terminal Rossmann domain. NADP(+) is bound by residues 45-48 (CGAQ), Arg-68, Arg-76, Ser-78, and 108-110 (DKQ). His-132 is a catalytic residue. Gly-158 contacts NADP(+). KARI C-terminal knotted domains are found at residues 209–344 (SFVA…NAPQ) and 345–485 (FEGK…MTDM). Positions 217, 221, 389, and 393 each coordinate Mg(2+). Residue Ser-414 coordinates substrate.

Belongs to the ketol-acid reductoisomerase family. Mg(2+) is required as a cofactor.

It carries out the reaction (2R)-2,3-dihydroxy-3-methylbutanoate + NADP(+) = (2S)-2-acetolactate + NADPH + H(+). The catalysed reaction is (2R,3R)-2,3-dihydroxy-3-methylpentanoate + NADP(+) = (S)-2-ethyl-2-hydroxy-3-oxobutanoate + NADPH + H(+). The protein operates within amino-acid biosynthesis; L-isoleucine biosynthesis; L-isoleucine from 2-oxobutanoate: step 2/4. Its pathway is amino-acid biosynthesis; L-valine biosynthesis; L-valine from pyruvate: step 2/4. Functionally, involved in the biosynthesis of branched-chain amino acids (BCAA). Catalyzes an alkyl-migration followed by a ketol-acid reduction of (S)-2-acetolactate (S2AL) to yield (R)-2,3-dihydroxy-isovalerate. In the isomerase reaction, S2AL is rearranged via a Mg-dependent methyl migration to produce 3-hydroxy-3-methyl-2-ketobutyrate (HMKB). In the reductase reaction, this 2-ketoacid undergoes a metal-dependent reduction by NADPH to yield (R)-2,3-dihydroxy-isovalerate. This is Ketol-acid reductoisomerase (NADP(+)) from Yersinia pestis bv. Antiqua (strain Antiqua).